A 79-amino-acid polypeptide reads, in one-letter code: Small ribosomal subunit protein bS18 (79 aa).

This sequence belongs to the bacterial ribosomal protein bS18 family. In terms of assembly, part of the 30S ribosomal subunit. Forms a tight heterodimer with protein bS6.

In terms of biological role, binds as a heterodimer with protein bS6 to the central domain of the 16S rRNA, where it helps stabilize the platform of the 30S subunit. The chain is Small ribosomal subunit protein bS18 from Bradyrhizobium sp. (strain BTAi1 / ATCC BAA-1182).